Consider the following 858-residue polypeptide: Ubiquitin carboxyl-terminal hydrolase 5 (858 aa).

Ala2 bears the N-acetylalanine mark. Residues 74–96 form a disordered region; the sequence is RRTRRPKEEDPATGTGDPPRKKP. Residue Lys113 forms a Glycyl lysine isopeptide (Lys-Gly) (interchain with G-Cter in SUMO) linkage. Ser149 and Ser156 each carry phosphoserine. The UBP-type; degenerate zinc-finger motif lies at 175–283; it reads QVSKHAFSLK…EHLSHFGIDM (109 aa). Cys195 and Cys816 are disulfide-bonded. Zn(2+) is bound by residues Cys199 and Cys202. Trp209 provides a ligand contact to substrate. Cys219 is a binding site for Zn(2+). 221-224 contacts substrate; it reads RRYF. His232 serves as a coordination point for Zn(2+). The substrate site is built by Tyr259, Tyr261, and Asp264. Thr292 is subject to Phosphothreonine. Positions 326–856 constitute a USP domain; sequence TGIRNLGNSC…LGYIYFYQRV (531 aa). The Nucleophile role is filled by Cys335. The residue at position 623 (Thr623) is a Phosphothreonine. UBA domains follow at residues 654-695 and 722-762; these read MLDE…VMSH and PPPE…IFSH. Residues Ser779, Ser783, and Ser785 each carry the phosphoserine modification. The active-site Proton acceptor is the His818.

It belongs to the peptidase C19 family. In terms of assembly, homodimer. Interacts with TRIML1. Post-translationally, ubiquitinated by SMURF1; leading to proteasomal degradation. SUMOylated at Lys-113; SUMOylation affects the interaction with Cav3.2 channels.

The protein resides in the cytoplasm. The protein localises to the stress granule. It localises to the nucleus. It catalyses the reaction Thiol-dependent hydrolysis of ester, thioester, amide, peptide and isopeptide bonds formed by the C-terminal Gly of ubiquitin (a 76-residue protein attached to proteins as an intracellular targeting signal).. Deubiquitinating enzyme that participates in a wide range of cellular processes by specifically cleaving isopeptide bonds between ubiquitin and substrate proteins or ubiquitin itself. Affects thereby important cellular signaling pathways such as NF-kappa-B, Wnt/beta-catenin, and cytokine production by regulating ubiquitin-dependent protein degradation. Participates in the activation of the Wnt signaling pathway by promoting FOXM1 deubiquitination and stabilization that induces the recruitment of beta-catenin to Wnt target gene promoter. Regulates the assembly and disassembly of heat-induced stress granules by mediating the hydrolysis of unanchored ubiquitin chains. Promotes lipopolysaccharide-induced apoptosis and inflammatory response by stabilizing the TXNIP protein. Affects T-cell biology by stabilizing the inhibitory receptor on T-cells PDC1. Acts as a negative regulator of autophagy by regulating ULK1 at both protein and mRNA levels. Acts also as a negative regulator of type I interferon production by simultaneously removing both 'Lys-48'-linked unanchored and 'Lys-63'-linked anchored polyubiquitin chains on the transcription factor IRF3. Modulates the stability of DNA mismatch repair protein MLH1 and counteracts the effect of the ubiquitin ligase UBR4. Upon activation by insulin, it gets phosphorylated through mTORC1-mediated phosphorylation to enhance YTHDF1 stability by removing 'Lys-11'-linked polyubiquitination. May also deubiquitinate other substrates such as the calcium channel CACNA1H. This Homo sapiens (Human) protein is Ubiquitin carboxyl-terminal hydrolase 5 (USP5).